We begin with the raw amino-acid sequence, 370 residues long: mRNA cap guanine-N(7) methyltransferase 1 (370 aa).

Positions 1–11 (MKRGFSDSPSS) are enriched in low complexity. Residues 1 to 34 (MKRGFSDSPSSSAPPPSSRFKSNPEGDSQFLEDE) are disordered. An mRNA cap 0 methyltransferase domain is found at 61–341 (SPIIHLKKLN…LYLSFVLRKR (281 aa)). 70-71 (NN) lines the mRNA pocket. Residues Lys74, Ala92, Asp114, 150 to 151 (DC), and 172 to 174 (QFA) contribute to the S-adenosyl-L-methionine site.

Belongs to the class I-like SAM-binding methyltransferase superfamily. mRNA cap 0 methyltransferase family.

Its subcellular location is the nucleus. The enzyme catalyses a 5'-end (5'-triphosphoguanosine)-ribonucleoside in mRNA + S-adenosyl-L-methionine = a 5'-end (N(7)-methyl 5'-triphosphoguanosine)-ribonucleoside in mRNA + S-adenosyl-L-homocysteine. MRNA-capping methyltransferase that methylates the N7 position of the added guanosine to the 5'-cap structure of mRNAs. Binds RNA containing 5'-terminal GpppC. In Arabidopsis thaliana (Mouse-ear cress), this protein is mRNA cap guanine-N(7) methyltransferase 1.